Reading from the N-terminus, the 368-residue chain is MTQPVMNPENYQVQLDEKTEALSAMFSEFDVPELEVFSSPAENYRMRAEFRIWHEGDDMYYVMFDQKTKEKYRVDYFLPATRLINDLMPLLAEAIKGSKTLRYKMFQVDFLSTLSGEILVSMLYHRQLDDAWKEEAAVLKQQLNEKGFNLNLIGRARKMKIVLDQEFVIEKLKVNDDILTYKQVENSFTQPNGVVAQKMLEWAVDCTQDSQGDLLELYCGNGNFSLALAKNFDRVLATELAKPSVESAQYNIAANNIDNVQIVRMSAEDFTDAMEGKREFRRLKDQNVDLKSYNCNTIFVDPPRSGMDEGTCKMVQGYERIMYISCNPDTLKENLAILSKTHNITRFALFDQFPYTHHMEAGIFLERK.

Residues Gln190, Tyr218, Asn223, Glu239, and Asp301 each coordinate S-adenosyl-L-methionine. Residue Cys326 is the Nucleophile of the active site. Residue Glu360 is the Proton acceptor of the active site.

The protein belongs to the class I-like SAM-binding methyltransferase superfamily. RNA M5U methyltransferase family. TrmA subfamily.

The enzyme catalyses uridine(54) in tRNA + S-adenosyl-L-methionine = 5-methyluridine(54) in tRNA + S-adenosyl-L-homocysteine + H(+). It catalyses the reaction uridine(341) in tmRNA + S-adenosyl-L-methionine = 5-methyluridine(341) in tmRNA + S-adenosyl-L-homocysteine + H(+). In terms of biological role, dual-specificity methyltransferase that catalyzes the formation of 5-methyluridine at position 54 (m5U54) in all tRNAs, and that of position 341 (m5U341) in tmRNA (transfer-mRNA). This chain is tRNA/tmRNA (uracil-C(5))-methyltransferase, found in Aliivibrio salmonicida (strain LFI1238) (Vibrio salmonicida (strain LFI1238)).